A 371-amino-acid polypeptide reads, in one-letter code: Peptide chain release factor 2 (371 aa).

Position 251 is an N5-methylglutamine (glutamine 251).

The protein belongs to the prokaryotic/mitochondrial release factor family. Methylated by PrmC. Methylation increases the termination efficiency of RF2.

It localises to the cytoplasm. Its function is as follows. Peptide chain release factor 2 directs the termination of translation in response to the peptide chain termination codons UGA and UAA. The sequence is that of Peptide chain release factor 2 from Pseudarthrobacter chlorophenolicus (strain ATCC 700700 / DSM 12829 / CIP 107037 / JCM 12360 / KCTC 9906 / NCIMB 13794 / A6) (Arthrobacter chlorophenolicus).